We begin with the raw amino-acid sequence, 187 residues long: UPF0232 protein MMAR_0004 (187 aa).

Disordered stretches follow at residues 1-77 and 166-187; these read MSDD…QPLG and ASPSWRKGPRHIAGRGPRDTYG. Residues 14 to 30 show a composition bias toward basic and acidic residues; the sequence is AARDELSGMDLVRRTLA. The span at 31–55 shows a compositional bias: low complexity; it reads EARAAARARGQDPGRGFAAGPAPRR.

It belongs to the UPF0232 family.

This chain is UPF0232 protein MMAR_0004, found in Mycobacterium marinum (strain ATCC BAA-535 / M).